A 369-amino-acid polypeptide reads, in one-letter code: Protein-glutamate methylesterase/protein-glutamine glutaminase (369 aa).

The 117-residue stretch at 6–122 folds into the Response regulatory domain; it reads RAVVADDSHF…SMEMSRLKDQ (117 aa). Position 56 is a 4-aspartylphosphate (aspartate 56). A disordered region spans residues 136–178; that stretch reads GATGSRSGTGSDSGTAPTTAGGSATDRRGTGGSSGQTTYVANP. A compositionally biased stretch (low complexity) spans 138–159; sequence TGSRSGTGSDSGTAPTTAGGSA. The CheB-type methylesterase domain maps to 173–367; the sequence is TYVANPTLVI…DGVIDTITTE (195 aa). Residues serine 185, histidine 212, and aspartate 309 contribute to the active site.

It belongs to the CheB family. Post-translationally, phosphorylated by CheA. Phosphorylation of the N-terminal regulatory domain activates the methylesterase activity.

Its subcellular location is the cytoplasm. The enzyme catalyses [protein]-L-glutamate 5-O-methyl ester + H2O = L-glutamyl-[protein] + methanol + H(+). It carries out the reaction L-glutaminyl-[protein] + H2O = L-glutamyl-[protein] + NH4(+). Its function is as follows. Involved in chemotaxis. Part of a chemotaxis signal transduction system that modulates chemotaxis in response to various stimuli. Catalyzes the demethylation of specific methylglutamate residues introduced into the chemoreceptors (methyl-accepting chemotaxis proteins or MCP) by CheR. Also mediates the irreversible deamidation of specific glutamine residues to glutamic acid. This is Protein-glutamate methylesterase/protein-glutamine glutaminase from Haloarcula marismortui (strain ATCC 43049 / DSM 3752 / JCM 8966 / VKM B-1809) (Halobacterium marismortui).